A 253-amino-acid chain; its full sequence is Triosephosphate isomerase, cytosolic (253 aa).

Positions 10 and 12 each coordinate substrate. The Electrophile role is filled by H96. The active-site Proton acceptor is E166.

The protein belongs to the triosephosphate isomerase family. In terms of assembly, homodimer.

It is found in the cytoplasm. It carries out the reaction D-glyceraldehyde 3-phosphate = dihydroxyacetone phosphate. Its pathway is carbohydrate biosynthesis; gluconeogenesis. It participates in carbohydrate degradation; glycolysis; D-glyceraldehyde 3-phosphate from glycerone phosphate: step 1/1. The sequence is that of Triosephosphate isomerase, cytosolic from Coptis japonica (Japanese goldthread).